We begin with the raw amino-acid sequence, 103 residues long: MIIVTTDTIANQNIVEVKGLVTSSIVQSRNIGKDILSGLKSVIGGELKNYTQMLEDSKKAVRERLVNQAEELGANAIVGLRFELSAGQGTSELIGYGTAVVIG.

Belongs to the UPF0145 family.

This chain is UPF0145 protein BLi01945/BL05168, found in Bacillus licheniformis (strain ATCC 14580 / DSM 13 / JCM 2505 / CCUG 7422 / NBRC 12200 / NCIMB 9375 / NCTC 10341 / NRRL NRS-1264 / Gibson 46).